Reading from the N-terminus, the 431-residue chain is Adenylosuccinate synthetase (431 aa).

Residues 12–18 (GDEGKGK) and 40–42 (GHT) contribute to the GTP site. Asp13 serves as the catalytic Proton acceptor. Residues Asp13 and Gly40 each coordinate Mg(2+). Residues 13-16 (DEGK), 38-41 (NAGH), Thr128, Arg142, Gln223, Thr238, and Arg301 each bind IMP. Residue His41 is the Proton donor of the active site. 297–303 (TVTGRPR) contributes to the substrate binding site. Residues Arg303, 329–331 (SID), and 411–413 (SVG) each bind GTP.

It belongs to the adenylosuccinate synthetase family. In terms of assembly, homodimer. It depends on Mg(2+) as a cofactor.

It localises to the cytoplasm. It catalyses the reaction IMP + L-aspartate + GTP = N(6)-(1,2-dicarboxyethyl)-AMP + GDP + phosphate + 2 H(+). It participates in purine metabolism; AMP biosynthesis via de novo pathway; AMP from IMP: step 1/2. Its function is as follows. Plays an important role in the de novo pathway of purine nucleotide biosynthesis. Catalyzes the first committed step in the biosynthesis of AMP from IMP. The protein is Adenylosuccinate synthetase of Lacticaseibacillus casei (strain BL23) (Lactobacillus casei).